We begin with the raw amino-acid sequence, 285 residues long: Trypsin Tyr p 3.0101 (285 aa).

Positions 1 to 16 (MKILLFLCFLVSVAFA) are cleaved as a signal peptide. The propeptide occupies 17–33 (KPPTIQLKSNTKSQNGF). In terms of domain architecture, Peptidase S1 spans 34-262 (IVGGTEAVDG…YLDWIELSAK (229 aa)). Cys58 and Cys74 are joined by a disulfide. Catalysis depends on charge relay system residues His73 and Asp120. 2 cysteine pairs are disulfide-bonded: Cys186/Cys202 and Cys214/Cys238. Catalysis depends on Ser218, which acts as the Charge relay system.

The protein belongs to the peptidase S1 family.

It localises to the secreted. It catalyses the reaction Preferential cleavage: Arg-|-Xaa, Lys-|-Xaa.. Its activity is regulated as follows. Inhibited by the serine protease inhibitor phenylmethylsulfonyl, and trypsin inhibitors soybean trypsin inhibitor and tosyllysine chloromethyl ketone. Not inhibited by dithiothreitol, a cysteine protease inhibitor. In terms of biological role, digests TAMe (p-toluene arginine methyl ester), but not ethyl N-benzoyl-L-tyrosinate (BTEE). The chain is Trypsin Tyr p 3.0101 from Tyrophagus putrescentiae (Mold mite).